The primary structure comprises 101 residues: uncharacterized protein (101 aa).

Its subcellular location is the cytoplasm. This is an uncharacterized protein from Saccharomyces cerevisiae (strain ATCC 204508 / S288c) (Baker's yeast).